A 1343-amino-acid polypeptide reads, in one-letter code: Spermatogenesis-associated protein 31A6 (1343 aa).

The chain crosses the membrane as a helical span at residues 23–43 (PWVLDIFLTLVFALGFFFLLL). 6 disordered regions span residues 55 to 88 (PSPSPGKRKCPVGRRRRPRGRMKNHSLRAGRECP), 106 to 235 (GPHL…STLI), 624 to 654 (DESPGTSQAKGKPSPWQSSTSTGESSKEAQK), 895 to 951 (PRGI…REAV), 1080 to 1156 (VQEE…PPSV), and 1309 to 1331 (KAVSPVSPPQHWPKTSGASSHHH). The segment covering 60–82 (GKRKCPVGRRRRPRGRMKNHSLR) has biased composition (basic residues). Polar residues predominate over residues 165 to 178 (LASTPSPGPMTTSV). Residues 198 to 222 (PEPPALFPHPPHTPDPLACSPPPPK) show a composition bias toward pro residues. 2 stretches are compositionally biased toward polar residues: residues 627 to 647 (PGTSQAKGKPSPWQSSTSTGE) and 923 to 944 (LTYSLTGSTQQSRSLGAQSSKA). Composition is skewed to basic and acidic residues over residues 1104–1123 (HKSEKSRKPNLEKHEERLEG) and 1133–1142 (RKTEDTHQDE).

The protein belongs to the SPATA31 family.

It localises to the membrane. In terms of biological role, may play a role in spermatogenesis. The chain is Spermatogenesis-associated protein 31A6 (SPATA31A6) from Homo sapiens (Human).